The sequence spans 20 residues: Dahlein-5.3 (20 aa).

Expressed by the skin dorsal glands.

The protein localises to the secreted. Its function is as follows. Has no antimicrobial activity. Strongly inhibits the formation of NO by neuronal nitric oxide synthase at micromolar concentrations. In Ranoidea dahlii (Dahl's aquatic frog), this protein is Dahlein-5.3.